The chain runs to 424 residues: MADTKPHLNLAFIGHVDHGKSTLVGRMMYEMGAIDEHIIEQYRKEAAAKGKATFEFAWVMDSLKEERERGVTIDIAHQRFDTDKYYFTVVDCPGHRDFVKNMITGASQADAAVLVVAAPDGVMAQTKEHVFLARTLGVNQLIVAINKMDATEPPYDEKRYNEVKEEVGKLLRMVGYKIDEVPFIPVSAYNGDNVVKHSDRTKWYTGPTVLDALNALKEPQKPVNLPLRIPVQDVYSISGVGTVPVGRVETGVLKKGDKVIFEPAHVSGEVKSIEIHHQEIPEAYPGDNIGWNVRGIGKNDIRRGDVCGHVDNPPTVAKEFTAQIVVLQHPSAISAGYTPVFHCHTAQVACTITEIKAKLDPRTGSVKEQNPAFIKTGDAAIISVRPTKPMVIEKVKEIPQLGRFAIRDMGMTIAAGMCQNVTPR.

Residues 5–223 (KPHLNLAFIG…NALKEPQKPV (219 aa)) enclose the tr-type G domain. Residues 14-21 (GHVDHGKS) are G1. 14-21 (GHVDHGKS) serves as a coordination point for GTP. Residue Ser21 coordinates Mg(2+). The tract at residues 70 to 74 (GVTID) is G2. The interval 91-94 (DCPG) is G3. GTP-binding positions include 91 to 95 (DCPGH) and 146 to 149 (NKMD). The tract at residues 146–149 (NKMD) is G4. Residues 187–189 (SAY) are G5.

Belongs to the TRAFAC class translation factor GTPase superfamily. Classic translation factor GTPase family. EF-Tu/EF-1A subfamily.

Its subcellular location is the cytoplasm. The enzyme catalyses GTP + H2O = GDP + phosphate + H(+). In terms of biological role, GTP hydrolase that promotes the GTP-dependent binding of aminoacyl-tRNA to the A-site of ribosomes during protein biosynthesis. This chain is Elongation factor 1-alpha, found in Methanothrix thermoacetophila (strain DSM 6194 / JCM 14653 / NBRC 101360 / PT) (Methanosaeta thermophila).